Here is a 336-residue protein sequence, read N- to C-terminus: Tetraacyldisaccharide 4'-kinase (336 aa).

58-65 (AVGGSGKT) is a binding site for ATP.

It belongs to the LpxK family.

It carries out the reaction a lipid A disaccharide + ATP = a lipid IVA + ADP + H(+). Its pathway is glycolipid biosynthesis; lipid IV(A) biosynthesis; lipid IV(A) from (3R)-3-hydroxytetradecanoyl-[acyl-carrier-protein] and UDP-N-acetyl-alpha-D-glucosamine: step 6/6. Functionally, transfers the gamma-phosphate of ATP to the 4'-position of a tetraacyldisaccharide 1-phosphate intermediate (termed DS-1-P) to form tetraacyldisaccharide 1,4'-bis-phosphate (lipid IVA). This Aromatoleum aromaticum (strain DSM 19018 / LMG 30748 / EbN1) (Azoarcus sp. (strain EbN1)) protein is Tetraacyldisaccharide 4'-kinase.